The following is a 346-amino-acid chain: Elongation factor Ts (346 aa).

The tract at residues T80–V83 is involved in Mg(2+) ion dislocation from EF-Tu.

The protein belongs to the EF-Ts family.

It localises to the cytoplasm. Associates with the EF-Tu.GDP complex and induces the exchange of GDP to GTP. It remains bound to the aminoacyl-tRNA.EF-Tu.GTP complex up to the GTP hydrolysis stage on the ribosome. The chain is Elongation factor Ts from Streptococcus pneumoniae serotype 19F (strain G54).